The following is a 183-amino-acid chain: Potassium-transporting ATPase KdpC subunit (183 aa).

A helical transmembrane segment spans residues 11–31 (LALLMTLLTGVLYPLAVTGVA).

It belongs to the KdpC family. As to quaternary structure, the system is composed of three essential subunits: KdpA, KdpB and KdpC.

It localises to the cell inner membrane. In terms of biological role, part of the high-affinity ATP-driven potassium transport (or Kdp) system, which catalyzes the hydrolysis of ATP coupled with the electrogenic transport of potassium into the cytoplasm. This subunit acts as a catalytic chaperone that increases the ATP-binding affinity of the ATP-hydrolyzing subunit KdpB by the formation of a transient KdpB/KdpC/ATP ternary complex. This Pseudomonas putida (strain GB-1) protein is Potassium-transporting ATPase KdpC subunit.